A 243-amino-acid polypeptide reads, in one-letter code: UPF0246 protein SAG2081 (243 aa).

This sequence belongs to the UPF0246 family.

This is UPF0246 protein SAG2081 from Streptococcus agalactiae serotype V (strain ATCC BAA-611 / 2603 V/R).